A 99-amino-acid polypeptide reads, in one-letter code: DNA-binding protein Fis (99 aa).

The segment at residues 75-94 is a DNA-binding region (H-T-H motif); it reads QTRAALMLGVNRGTLRKKLK.

The protein belongs to the transcriptional regulatory Fis family. As to quaternary structure, homodimer.

Its function is as follows. Activates ribosomal RNA transcription. Plays a direct role in upstream activation of rRNA promoters. The polypeptide is DNA-binding protein Fis (Actinobacillus succinogenes (strain ATCC 55618 / DSM 22257 / CCUG 43843 / 130Z)).